Reading from the N-terminus, the 342-residue chain is Epoxide hydrolase srdG (342 aa).

Residues 44-332 (ATVLLLHGWP…LIHTPEEVNK (289 aa)) form the AB hydrolase-1 domain. The Nucleophile role is filled by aspartate 122. The Proton acceptor role is filled by histidine 320.

It belongs to the AB hydrolase superfamily. Epoxide hydrolase family.

In terms of biological role, highly reducing polyketide synthase; part of the gene cluster that mediates the biosynthesis of sordarial, a salicylic aldehyde structurally related to the phytotoxin pyriculol. The most interesting aspect of this pathway is formation of an aromatic product from the highly reducing polyketide synthase srdA. SrdA synthesizes a reduced polyketide chain from one molecule of acetyl-CoA and five molecules of malonyl-CoA. The polyketide chain is then reductively released as an aldehyde. The oxidoreductases srdC, srdD and srdE then oxidize one of the hydroxy groups to facilitate the intramolecular aldol condensation, followed by dehydration to yield a salicylic aldehyde. This aldehyde can undergo facile reduction by endogenous reductases to yield the alcohol 1-hydroxy-2-hydroxymethyl-3-pent-1,3-dienylbenzene. The flavin-dependent srdI counteract against the propensity of the aldehydes to be reduced under physiological conditions and is responsible for reoxidizing 1-hydroxy-2-hydroxymethyl-3-pent-1,3-dienylbenzene back to the salicylic aldehyde. This salicylic aldehyde is then selectively epoxidized by the cupin-domain-containing oxidoreductase srdB to yield the epoxide, which can be hydrolyzed stereoselectively by the hydrolase srdG to give the final product sordarial. The polypeptide is Epoxide hydrolase srdG (Neurospora crassa (strain ATCC 24698 / 74-OR23-1A / CBS 708.71 / DSM 1257 / FGSC 987)).